The following is a 222-amino-acid chain: C-8 sterol isomerase ERG2 (222 aa).

The chain crosses the membrane as a helical span at residues 3-23 (FFPLLLLIGVVGYIMNVLFTT).

The protein belongs to the ERG2 family.

Its subcellular location is the endoplasmic reticulum membrane. It catalyses the reaction fecosterol = episterol. The protein operates within steroid metabolism; ergosterol biosynthesis; ergosterol from zymosterol: step 2/5. Its activity is regulated as follows. Catalytic activity is inhibited by the morphilines tridemorph, fenpropimorph, and fenpropidin. Its function is as follows. C-8 sterol isomerase; part of the third module of ergosterol biosynthesis pathway that includes the late steps of the pathway. ERG2 catalyzes the reaction which results in unsaturation at C-7 in the B ring of sterols and thus converts fecosterol to episterol. The third module or late pathway involves the ergosterol synthesis itself through consecutive reactions that mainly occur in the endoplasmic reticulum (ER) membrane. Firstly, the squalene synthase ERG9 catalyzes the condensation of 2 farnesyl pyrophosphate moieties to form squalene, which is the precursor of all steroids. Squalene synthase is crucial for balancing the incorporation of farnesyl diphosphate (FPP) into sterol and nonsterol isoprene synthesis. Secondly, the squalene epoxidase ERG1 catalyzes the stereospecific oxidation of squalene to (S)-2,3-epoxysqualene, which is considered to be a rate-limiting enzyme in steroid biosynthesis. Then, the lanosterol synthase ERG7 catalyzes the cyclization of (S)-2,3 oxidosqualene to lanosterol, a reaction that forms the sterol core. In the next steps, lanosterol is transformed to zymosterol through a complex process involving various demethylation, reduction and desaturation reactions. The lanosterol 14-alpha-demethylase ERG11 (also known as CYP51) catalyzes C14-demethylation of lanosterol to produce 4,4'-dimethyl cholesta-8,14,24-triene-3-beta-ol, which is critical for ergosterol biosynthesis. The C-14 reductase ERG24 reduces the C14=C15 double bond of 4,4-dimethyl-cholesta-8,14,24-trienol to produce 4,4-dimethyl-cholesta-8,24-dienol. 4,4-dimethyl-cholesta-8,24-dienol is substrate of the C-4 demethylation complex ERG25-ERG26-ERG27 in which ERG25 catalyzes the three-step monooxygenation required for the demethylation of 4,4-dimethyl and 4alpha-methylsterols, ERG26 catalyzes the oxidative decarboxylation that results in a reduction of the 3-beta-hydroxy group at the C-3 carbon to an oxo group, and ERG27 is responsible for the reduction of the keto group on the C-3. ERG28 has a role as a scaffold to help anchor ERG25, ERG26 and ERG27 to the endoplasmic reticulum and ERG29 regulates the activity of the iron-containing C4-methylsterol oxidase ERG25. Then, the sterol 24-C-methyltransferase ERG6 catalyzes the methyl transfer from S-adenosyl-methionine to the C-24 of zymosterol to form fecosterol. The C-8 sterol isomerase ERG2 catalyzes the reaction which results in unsaturation at C-7 in the B ring of sterols and thus converts fecosterol to episterol. The sterol-C5-desaturase ERG3 then catalyzes the introduction of a C-5 double bond in the B ring to produce 5-dehydroepisterol. The C-22 sterol desaturase ERG5 further converts 5-dehydroepisterol into ergosta-5,7,22,24(28)-tetraen-3beta-ol by forming the C-22(23) double bond in the sterol side chain. Finally, ergosta-5,7,22,24(28)-tetraen-3beta-ol is substrate of the C-24(28) sterol reductase ERG4 to produce ergosterol. The polypeptide is C-8 sterol isomerase ERG2 (Saccharomyces cerevisiae (strain ATCC 204508 / S288c) (Baker's yeast)).